The primary structure comprises 261 residues: Global transcriptional regulator CodY (261 aa).

The interval 1-159 is GAF domain; that stretch reads MPNLLEKTRK…ASTVVGIQLL (159 aa). Positions 207–226 form a DNA-binding region, H-T-H motif; sequence ASVIADRIGITRSVIVNALR.

This sequence belongs to the CodY family.

It localises to the cytoplasm. Its function is as follows. DNA-binding global transcriptional regulator which is involved in the adaptive response to starvation and acts by directly or indirectly controlling the expression of numerous genes in response to nutrient availability. During rapid exponential growth, CodY is highly active and represses genes whose products allow adaptation to nutrient depletion. In Streptococcus agalactiae serotype Ia (strain ATCC 27591 / A909 / CDC SS700), this protein is Global transcriptional regulator CodY.